Reading from the N-terminus, the 112-residue chain is Replication initiation control protein YabA (112 aa).

H85, C87, C101, and C104 together coordinate Zn(2+).

It belongs to the YabA family. In terms of assembly, homotetramer. Interacts with both DnaA and DnaN, acting as a bridge between these two proteins. Zn(2+) is required as a cofactor.

Its subcellular location is the cytoplasm. The protein resides in the nucleoid. Its function is as follows. Involved in control of chromosome replication initiation. Inhibits the cooperative binding of DnaA to the oriC region, thus negatively regulating initiation of chromosome replication. Inhibits the ability of DnaA-ATP to form a helix on DNA; does not disassemble preformed DnaA-DNA helices. Decreases the residence time of DnaA on the chromosome at its binding sites (oriC, replication forks and promoter-binding sites). Tethers DnaA to the replication machinery via the DNA polymerase beta sliding clamp subunit (dnaN). Associates with oriC and other DnaA targets on the chromosome in a DnaA-dependent manner. This is Replication initiation control protein YabA from Lacticaseibacillus casei (strain BL23) (Lactobacillus casei).